The primary structure comprises 257 residues: Ribosomal RNA small subunit methyltransferase A (257 aa).

S-adenosyl-L-methionine is bound by residues His-12, Leu-14, Gly-39, Glu-60, Asp-83, and Asn-101.

The protein belongs to the class I-like SAM-binding methyltransferase superfamily. rRNA adenine N(6)-methyltransferase family. RsmA subfamily.

The protein localises to the cytoplasm. It catalyses the reaction adenosine(1518)/adenosine(1519) in 16S rRNA + 4 S-adenosyl-L-methionine = N(6)-dimethyladenosine(1518)/N(6)-dimethyladenosine(1519) in 16S rRNA + 4 S-adenosyl-L-homocysteine + 4 H(+). In terms of biological role, specifically dimethylates two adjacent adenosines (A1518 and A1519) in the loop of a conserved hairpin near the 3'-end of 16S rRNA in the 30S particle. May play a critical role in biogenesis of 30S subunits. In Nitrosomonas europaea (strain ATCC 19718 / CIP 103999 / KCTC 2705 / NBRC 14298), this protein is Ribosomal RNA small subunit methyltransferase A.